The sequence spans 945 residues: Kinesin-like protein KIN-UA (945 aa).

The segment at Met-1–Asp-54 is disordered. The span at Ala-22–Pro-31 shows a compositional bias: low complexity. The Kinesin motor domain maps to Arg-57–Ile-399. Gly-142–Thr-149 is a binding site for ATP. A D-BOX motif is present at residues Arg-369–Gly-377. Positions Tyr-415–Asp-644 form a coiled coil. 4 ARM repeats span residues Arg-683–Ala-722, Asp-724–Met-764, Gly-766–Gly-806, and Glu-808–Lys-847.

The protein belongs to the TRAFAC class myosin-kinesin ATPase superfamily. Kinesin family. Ungrouped subfamily.

It is found in the cytoplasm. It localises to the cytoskeleton. The protein is Kinesin-like protein KIN-UA of Oryza sativa subsp. japonica (Rice).